The chain runs to 56 residues: Ovomucoid (56 aa).

A Kazal-like domain is found at 6–56 (VDCSEYPKPACMSEYRPLCGSDNKTYVNKCNFCNAVVESNGTLTLSHFGKC). Cystine bridges form between Cys-8–Cys-38, Cys-16–Cys-35, and Cys-24–Cys-56. A glycan (N-linked (GlcNAc...) asparagine) is linked at Asn-45.

It localises to the secreted. The polypeptide is Ovomucoid (Colinus virginianus (Northern bobwhite)).